Here is a 240-residue protein sequence, read N- to C-terminus: Sugar fermentation stimulation protein homolog (240 aa).

The protein belongs to the SfsA family.

The sequence is that of Sugar fermentation stimulation protein homolog from Crocosphaera subtropica (strain ATCC 51142 / BH68) (Cyanothece sp. (strain ATCC 51142)).